Consider the following 452-residue polypeptide: Trigger factor (452 aa).

The region spanning 170-256 is the PPIase FKBP-type domain; it reads NSIVKVDFVE…IKSIKKRDLP (87 aa).

The protein belongs to the FKBP-type PPIase family. Tig subfamily.

Its subcellular location is the cytoplasm. It carries out the reaction [protein]-peptidylproline (omega=180) = [protein]-peptidylproline (omega=0). Its function is as follows. Involved in protein export. Acts as a chaperone by maintaining the newly synthesized protein in an open conformation. Functions as a peptidyl-prolyl cis-trans isomerase. The protein is Trigger factor of Borrelia garinii subsp. bavariensis (strain ATCC BAA-2496 / DSM 23469 / PBi) (Borreliella bavariensis).